Consider the following 157-residue polypeptide: SsrA-binding protein (157 aa).

The segment at 132–157 (EHDKRDTIKEREGKREVERAMKSRHR) is disordered.

Belongs to the SmpB family.

It localises to the cytoplasm. Its function is as follows. Required for rescue of stalled ribosomes mediated by trans-translation. Binds to transfer-messenger RNA (tmRNA), required for stable association of tmRNA with ribosomes. tmRNA and SmpB together mimic tRNA shape, replacing the anticodon stem-loop with SmpB. tmRNA is encoded by the ssrA gene; the 2 termini fold to resemble tRNA(Ala) and it encodes a 'tag peptide', a short internal open reading frame. During trans-translation Ala-aminoacylated tmRNA acts like a tRNA, entering the A-site of stalled ribosomes, displacing the stalled mRNA. The ribosome then switches to translate the ORF on the tmRNA; the nascent peptide is terminated with the 'tag peptide' encoded by the tmRNA and targeted for degradation. The ribosome is freed to recommence translation, which seems to be the essential function of trans-translation. The sequence is that of SsrA-binding protein from Paracidovorax citrulli (strain AAC00-1) (Acidovorax citrulli).